Consider the following 115-residue polypeptide: U3-lycotoxin-Ls1k (115 aa).

Positions 1–20 are cleaved as a signal peptide; it reads MKFVLLFGVLLVTLFSYSSA. Residues 21–44 constitute a propeptide that is removed on maturation; the sequence is EMFDDFDQADEDELLSLIEKEEAR. 4 disulfides stabilise this stretch: Cys48–Cys63, Cys55–Cys72, Cys62–Cys87, and Cys74–Cys85.

This sequence belongs to the neurotoxin 19 (CSTX) family. 01 subfamily. In terms of tissue distribution, expressed by the venom gland.

Its subcellular location is the secreted. In Lycosa singoriensis (Wolf spider), this protein is U3-lycotoxin-Ls1k.